The primary structure comprises 529 residues: Cytochrome P450 monooxygenase acuD (529 aa).

Residues F8–A28 traverse the membrane as a helical segment. A glycan (N-linked (GlcNAc...) asparagine) is linked at N81. C449 contributes to the heme binding site.

It belongs to the cytochrome P450 family. It depends on heme as a cofactor.

It is found in the endoplasmic reticulum membrane. It carries out the reaction 3-hydroxybenzyl alcohol + reduced [NADPH--hemoprotein reductase] + O2 = gentisyl alcohol + oxidized [NADPH--hemoprotein reductase] + H2O + H(+). The protein operates within secondary metabolite biosynthesis. Its function is as follows. Cytochrome P450 monooxygenase; part of the gene cluster that mediates the biosynthesis of aculins. The pathway begins with the synthesis of 6-methylsalicylic acid by the polyketide synthase (PKS) acuA via condensation of acetate and malonate units. The 6-methylsalicylic acid decarboxylase acuB then catalyzes the decarboxylation of 6-methylsalicylic acid to yield m-cresol (also known as 3-methylphenol). These first reactions occur in the cytosol. The intermediate m-cresol is then transported into the endoplasmic reticulum where the cytochrome P450 monooxygenase acuC converts it to m-hydroxybenzyl alcohol, which is further converted to gentisyl alcohol by the cytochrome P450 monooxygenase acuD. Gentisyl alcohol is further oxidized by the oxidoreductase acuE that probably catalyzes hydroxylation of the aromatic ring. The aromatic system might then be opened by oxidation through a Baeyer-Villiger type of oxidation, which could be catalyzed by acuF, with the carboxylic acid at C-1 subsequently reduced to an aldehyde by acuG. Subsequently, a hemiacetal is formed, before the dehydrogenase acuH would reduce the double bond between C-4 and C-6. Finally, keto-enol tautomerism results in formation of aculinic acid, which exists as two diastereomers (both R/S configurations at C-1) by non-enzymatic hemiacetal formation. The carboxypeptidase acuI could be involved in the linking of aculinic acid to an aculene A moiety produced by the aculene biosynthesis cluster and which leads to the production of aculin A. AcuI may also be involved in the attachment of proline to aculinic acid to form epi-aculins A and B. The protein is Cytochrome P450 monooxygenase acuD of Aspergillus aculeatus (strain ATCC 16872 / CBS 172.66 / WB 5094).